The chain runs to 218 residues: Uracil-DNA glycosylase (218 aa).

The active-site Proton acceptor is aspartate 68.

This sequence belongs to the uracil-DNA glycosylase (UDG) superfamily. UNG family. As to quaternary structure, homodimer. Interacts with protein OPG148. Component of the Uracil-DNA glycosylase(UDG)-OPG148-polymerase complex; OPG148 and UDG form a heterodimeric processivity factor that associates with OPG71 to form the processive polymerase holoenzyme.

The enzyme catalyses Hydrolyzes single-stranded DNA or mismatched double-stranded DNA and polynucleotides, releasing free uracil.. Functionally, plays an essential role in viral replication as a component of the DNA polymerase processivity factor. Excises uracil residues from the DNA which can arise as a result of misincorporation of dUMP residues by DNA polymerase or due to deamination of cytosine. In Variola virus, this protein is Uracil-DNA glycosylase (OPG116).